Here is a 156-residue protein sequence, read N- to C-terminus: Isotocin-neurophysin IT 2 (156 aa).

Positions 1-19 (MTGAAVSVCLLYALSVCSA) are cleaved as a signal peptide. An intrachain disulfide couples cysteine 20 to cysteine 25. A Glycine amide modification is found at glycine 28. Intrachain disulfides connect cysteine 41/cysteine 85, cysteine 44/cysteine 58, cysteine 52/cysteine 75, cysteine 59/cysteine 65, cysteine 92/cysteine 105, cysteine 99/cysteine 117, and cysteine 106/cysteine 111.

It belongs to the vasopressin/oxytocin family. In terms of processing, seven disulfide bonds are present in neurophysin.

The protein localises to the secreted. In terms of biological role, isotocin causes contraction of smooth muscles. This Oncorhynchus keta (Chum salmon) protein is Isotocin-neurophysin IT 2.